The sequence spans 962 residues: Cohesin subunit psc3 (962 aa).

The segment at 1-72 (MSESVTTGSD…GVNVKRSRRN (72 aa)) is disordered. The span at 21–30 (VMLSQSFDPM) shows a compositional bias: polar residues. Residues 51–71 (SSKKRHPRPNSKGVNVKRSRR) are compositionally biased toward basic residues. The stretch at 236–275 (LCEKSKELLNEHAIATKQLEKEEKRSRVNRNRINELNNSL) forms a coiled coil. An SCD domain is found at 297-382 (FVHRYRDVEP…SRFKERILEM (86 aa)).

The protein belongs to the SCC3 family. As to quaternary structure, cohesin complexes are composed of the psm1/smc1 and psm3/smc3 heterodimer attached via their hinge domain, rad21/scc1 which link them, and psc3/scc3, which interacts with rad21. Interacts with swi6. The interaction with swi6 may contribute to recruit cohesin complex to heterochromatin.

The protein localises to the nucleus. Its subcellular location is the chromosome. The protein resides in the centromere. Functionally, component of cohesin complex, a complex required for the cohesion of sister chromatids after DNA replication. The cohesin complex apparently forms a large proteinaceous ring within which sister chromatids can be trapped. At anaphase, the rad21 subunit of the cohesin complex is cleaved and dissociates from chromatin, allowing sister chromatids to segregate. The cohesin complex may also play a role in spindle pole assembly during mitosis. The chain is Cohesin subunit psc3 (psc3) from Schizosaccharomyces pombe (strain 972 / ATCC 24843) (Fission yeast).